Consider the following 640-residue polypeptide: Threonine--tRNA ligase (640 aa).

The region spanning 1 to 61 is the TGS domain; it reads MPTITLPDGS…ENDASLQIIT (61 aa). The segment at 242 to 533 is catalytic; sequence DHRKIGKRLG…LIEHYEGAFP (292 aa). The Zn(2+) site is built by Cys-333, His-384, and His-510.

This sequence belongs to the class-II aminoacyl-tRNA synthetase family. In terms of assembly, homodimer. Requires Zn(2+) as cofactor.

The protein resides in the cytoplasm. It carries out the reaction tRNA(Thr) + L-threonine + ATP = L-threonyl-tRNA(Thr) + AMP + diphosphate + H(+). Catalyzes the attachment of threonine to tRNA(Thr) in a two-step reaction: L-threonine is first activated by ATP to form Thr-AMP and then transferred to the acceptor end of tRNA(Thr). Also edits incorrectly charged L-seryl-tRNA(Thr). The sequence is that of Threonine--tRNA ligase from Pseudomonas syringae pv. syringae (strain B728a).